Reading from the N-terminus, the 260-residue chain is Small ribosomal subunit protein uS2 (260 aa).

The protein belongs to the universal ribosomal protein uS2 family.

The sequence is that of Small ribosomal subunit protein uS2 from Staphylococcus carnosus (strain TM300).